We begin with the raw amino-acid sequence, 359 residues long: Methylthioribose-1-phosphate isomerase (359 aa).

Residues 50-52, Arg-93, and Gln-200 each bind substrate; that span reads RGA. Asp-241 functions as the Proton donor in the catalytic mechanism. 251–252 lines the substrate pocket; it reads NK.

It belongs to the eIF-2B alpha/beta/delta subunits family. MtnA subfamily.

It carries out the reaction 5-(methylsulfanyl)-alpha-D-ribose 1-phosphate = 5-(methylsulfanyl)-D-ribulose 1-phosphate. It participates in amino-acid biosynthesis; L-methionine biosynthesis via salvage pathway; L-methionine from S-methyl-5-thio-alpha-D-ribose 1-phosphate: step 1/6. In terms of biological role, catalyzes the interconversion of methylthioribose-1-phosphate (MTR-1-P) into methylthioribulose-1-phosphate (MTRu-1-P). In Symbiobacterium thermophilum (strain DSM 24528 / JCM 14929 / IAM 14863 / T), this protein is Methylthioribose-1-phosphate isomerase.